We begin with the raw amino-acid sequence, 104 residues long: Phosphoribosyl-ATP pyrophosphatase (104 aa).

The protein belongs to the PRA-PH family.

It is found in the cytoplasm. It catalyses the reaction 1-(5-phospho-beta-D-ribosyl)-ATP + H2O = 1-(5-phospho-beta-D-ribosyl)-5'-AMP + diphosphate + H(+). The protein operates within amino-acid biosynthesis; L-histidine biosynthesis; L-histidine from 5-phospho-alpha-D-ribose 1-diphosphate: step 2/9. The polypeptide is Phosphoribosyl-ATP pyrophosphatase (Allorhizobium ampelinum (strain ATCC BAA-846 / DSM 112012 / S4) (Agrobacterium vitis (strain S4))).